Reading from the N-terminus, the 199-residue chain is Dephospho-CoA kinase (199 aa).

A DPCK domain is found at 3 to 199; the sequence is ILGLTGSIGM…EVVKMPQRRA (197 aa). ATP is bound at residue 11 to 16; sequence GMGKST.

This sequence belongs to the CoaE family.

The protein resides in the cytoplasm. The enzyme catalyses 3'-dephospho-CoA + ATP = ADP + CoA + H(+). It participates in cofactor biosynthesis; coenzyme A biosynthesis; CoA from (R)-pantothenate: step 5/5. Its function is as follows. Catalyzes the phosphorylation of the 3'-hydroxyl group of dephosphocoenzyme A to form coenzyme A. The sequence is that of Dephospho-CoA kinase from Bradyrhizobium diazoefficiens (strain JCM 10833 / BCRC 13528 / IAM 13628 / NBRC 14792 / USDA 110).